The following is a 301-amino-acid chain: Vomeronasal type-1 receptor 4 (301 aa).

Residues 1–5 (MASRY) are Extracellular-facing. The chain crosses the membrane as a helical span at residues 6-26 (VAVGMILSQTVVGVLGSFSVL). The Cytoplasmic portion of the chain corresponds to 27-48 (LHYLSFYCTGCRLRSTDLIVKH). A helical transmembrane segment spans residues 49-69 (LIVANFLALRCKGVPQTMAAF). Residues 70–88 (GVRYFLNALGCKLVFYLHR) are Extracellular-facing. The helical transmembrane segment at 89-109 (VGRGVSIGTTCLLSVFQVITV) threads the bilayer. The Cytoplasmic portion of the chain corresponds to 110-126 (SSRKSRWAKLKEKAPKH). Residues 127 to 147 (VGFSVLLCWIVCMLVNIIFPM) traverse the membrane as a helical segment. Residues 148–185 (YVTGKWNYTNITVNEDLGYCSGGGNNKIAQTLRAMLLS) lie on the Extracellular side of the membrane. Asparagine 154 and asparagine 157 each carry an N-linked (GlcNAc...) asparagine glycan. A helical membrane pass occupies residues 186 to 206 (FPDVLCLGLMLWVSSSMVCIL). Topologically, residues 207–234 (HRHKQRVQHIDRSNLSPRASPENRATQS) are cytoplasmic. The helical transmembrane segment at 235–255 (ILILVSTFVSSYTLSCLFQVC) threads the bilayer. The Extracellular segment spans residues 256–264 (MALLDNPNS). The chain crosses the membrane as a helical span at residues 265-285 (LLVNTSALMSVCFPTLSPFVL). The Cytoplasmic segment spans residues 286 to 301 (MSCDPSVYRFCFAWKR).

This sequence belongs to the G-protein coupled receptor 1 family.

It localises to the cell membrane. In terms of biological role, putative pheromone receptor. The chain is Vomeronasal type-1 receptor 4 (VN1R4) from Homo sapiens (Human).